The sequence spans 98 residues: MAKTKYEVTYIIKPDIDEDSKKALIDRFDKVVTDNGAEELESKDWGKRRFAYEIEKYREGTYHIMTFVAENSEPVDEFGRLSRIDNQILRSMTVKLDK.

This sequence belongs to the bacterial ribosomal protein bS6 family.

Its function is as follows. Binds together with bS18 to 16S ribosomal RNA. In Lactobacillus johnsonii (strain CNCM I-12250 / La1 / NCC 533), this protein is Small ribosomal subunit protein bS6.